The chain runs to 1199 residues: DNA-directed RNA polymerase subunit beta' (1199 aa).

4 residues coordinate Zn(2+): Cys60, Cys62, Cys75, and Cys78. Residues Asp449, Asp451, and Asp453 each coordinate Mg(2+). Positions 818, 892, 899, and 902 each coordinate Zn(2+).

This sequence belongs to the RNA polymerase beta' chain family. In terms of assembly, the RNAP catalytic core consists of 2 alpha, 1 beta, 1 beta' and 1 omega subunit. When a sigma factor is associated with the core the holoenzyme is formed, which can initiate transcription. Mg(2+) serves as cofactor. Requires Zn(2+) as cofactor.

The enzyme catalyses RNA(n) + a ribonucleoside 5'-triphosphate = RNA(n+1) + diphosphate. Functionally, DNA-dependent RNA polymerase catalyzes the transcription of DNA into RNA using the four ribonucleoside triphosphates as substrates. This Bacillus pumilus (strain SAFR-032) protein is DNA-directed RNA polymerase subunit beta'.